The primary structure comprises 221 residues: Riboflavin kinase (221 aa).

An H-T-H motif-like region spans residues 1–89; the sequence is MENIYIALKT…ISSILRFSQE (89 aa). Residues 90–221 are riboflavin kinase; it reads LKLVGAVQDG…EVLASIDGKL (132 aa). 99–104 is a CDP binding site; that stretch reads GLGEGK. 2 residues coordinate Mg(2+): Thr-128 and Asn-130. FMN contacts are provided by Ser-185 and Glu-192. 197 to 200 serves as a coordination point for CDP; sequence KYLR.

It belongs to the archaeal riboflavin kinase family. Mg(2+) serves as cofactor.

The catalysed reaction is riboflavin + CTP = CDP + FMN + H(+). The protein operates within cofactor biosynthesis; FMN biosynthesis; FMN from riboflavin (CTP route): step 1/1. In terms of biological role, catalyzes the CTP-dependent phosphorylation of riboflavin (vitamin B2) to form flavin mononucleotide (FMN). The polypeptide is Riboflavin kinase (ribK) (Picrophilus torridus (strain ATCC 700027 / DSM 9790 / JCM 10055 / NBRC 100828 / KAW 2/3)).